A 938-amino-acid chain; its full sequence is Isoleucine--tRNA ligase (938 aa).

Residues P58 to H68 carry the 'HIGH' region motif. E562 contacts L-isoleucyl-5'-AMP. Residues K603–S607 carry the 'KMSKS' region motif. An ATP-binding site is contributed by K606. Zn(2+) is bound by residues C901, C904, C921, and C924.

It belongs to the class-I aminoacyl-tRNA synthetase family. IleS type 1 subfamily. Monomer. The cofactor is Zn(2+).

It is found in the cytoplasm. The enzyme catalyses tRNA(Ile) + L-isoleucine + ATP = L-isoleucyl-tRNA(Ile) + AMP + diphosphate. Its function is as follows. Catalyzes the attachment of isoleucine to tRNA(Ile). As IleRS can inadvertently accommodate and process structurally similar amino acids such as valine, to avoid such errors it has two additional distinct tRNA(Ile)-dependent editing activities. One activity is designated as 'pretransfer' editing and involves the hydrolysis of activated Val-AMP. The other activity is designated 'posttransfer' editing and involves deacylation of mischarged Val-tRNA(Ile). The protein is Isoleucine--tRNA ligase of Glaesserella parasuis serovar 5 (strain SH0165) (Haemophilus parasuis).